A 263-amino-acid chain; its full sequence is Oxidoreductase UcpA (263 aa).

10–32 (LITGASQGIGEGIARVFARHGAN) provides a ligand contact to NAD(+). A substrate-binding site is contributed by S141. Y155 (proton acceptor) is an active-site residue.

This sequence belongs to the short-chain dehydrogenases/reductases (SDR) family.

The protein is Oxidoreductase UcpA (ucpA) of Salmonella typhi.